Reading from the N-terminus, the 66-residue chain is Cold shock protein CspC (66 aa).

Residues 4-63 (GTVKWFNAEKGFGFIERENGDDVFVHFSAIQSDGFKSLDEGQKVSFDVEQGARGAQAANV) form the CSD domain.

Its subcellular location is the cytoplasm. The chain is Cold shock protein CspC (cspC) from Bacillus subtilis (strain 168).